The chain runs to 457 residues: Asparagine--tRNA ligase (457 aa).

This sequence belongs to the class-II aminoacyl-tRNA synthetase family. Homodimer.

The protein localises to the cytoplasm. The catalysed reaction is tRNA(Asn) + L-asparagine + ATP = L-asparaginyl-tRNA(Asn) + AMP + diphosphate + H(+). The chain is Asparagine--tRNA ligase from Phytoplasma australiense.